A 999-amino-acid polypeptide reads, in one-letter code: Transcription-repair-coupling factor (999 aa).

The Helicase ATP-binding domain occupies 499–656 (DLSSHRVMDR…LSQIKGISSL (158 aa)). ATP is bound at residue 512 to 519 (GDVGFGKT). Positions 609–612 (DEEH) match the DEEH box motif. Residues 677–833 (LLKEIIYREL…SVAYHDLEIR (157 aa)) form the Helicase C-terminal domain.

In the N-terminal section; belongs to the UvrB family. This sequence in the C-terminal section; belongs to the helicase family. RecG subfamily.

It is found in the cytoplasm. In terms of biological role, couples transcription and DNA repair by recognizing RNA polymerase (RNAP) stalled at DNA lesions. Mediates ATP-dependent release of RNAP and its truncated transcript from the DNA, and recruitment of nucleotide excision repair machinery to the damaged site. The chain is Transcription-repair-coupling factor from Helicobacter pylori (strain ATCC 700392 / 26695) (Campylobacter pylori).